The sequence spans 338 residues: Heme-dependent oxidative N-demethylase alpha subunit (338 aa).

Heme b contacts are provided by Y38 and H194. Catalysis depends on R224, which acts as the Proton donor. N226 is a heme b binding site. E266 contacts dimethylamine. Residues Y317 and K318 each coordinate heme b.

The heme-dependent oxidative N-demethylase (HODM) is a heterotetramer composed of a catalytic alpha subunit, a FMN/2Fe-2S-dependent oxidoreductase beta subunit, a gamma subunit with putative aminotransferase activity, and a delta subunit of unknown function.

The catalysed reaction is dimethylamine + NADPH + O2 + H(+) = methylamine + formaldehyde + NADP(+) + H2O. Component of the heme-dependent oxidative N-demethylase (HODM) enzyme, that catalyzes the NADPH-dependent oxidation of dimethylamine (DMA) to methylamine (MA) and formaldehyde. Functions in bacterial methylated amine catabolism, linking alkylamine oxidation to the tetrahydrofolate C1 pool. The alpha subunit of HODM binds heme, oxygen and DMA, and serves as the site of the oxidative N-demethylase activity. The chain is Heme-dependent oxidative N-demethylase alpha subunit from Ectopseudomonas mendocina (strain ymp) (Pseudomonas mendocina).